We begin with the raw amino-acid sequence, 449 residues long: Exodeoxyribonuclease 7 large subunit (449 aa).

It belongs to the XseA family. As to quaternary structure, heterooligomer composed of large and small subunits.

The protein resides in the cytoplasm. The catalysed reaction is Exonucleolytic cleavage in either 5'- to 3'- or 3'- to 5'-direction to yield nucleoside 5'-phosphates.. Functionally, bidirectionally degrades single-stranded DNA into large acid-insoluble oligonucleotides, which are then degraded further into small acid-soluble oligonucleotides. The polypeptide is Exodeoxyribonuclease 7 large subunit (Lacticaseibacillus paracasei (strain ATCC 334 / BCRC 17002 / CCUG 31169 / CIP 107868 / KCTC 3260 / NRRL B-441) (Lactobacillus paracasei)).